The sequence spans 83 residues: Mu-theraphotoxin-Hhn2k (83 aa).

Residues 1 to 21 form the signal peptide; that stretch reads MKASMFLALAGLVLLFVVDYA. Residues 22-48 constitute a propeptide that is removed on maturation; the sequence is SESEEKEFPIELLSKIFAVDVFKGEER. Cystine bridges form between Cys-50–Cys-65, Cys-57–Cys-70, and Cys-64–Cys-77. Leu-81 bears the Leucine amide mark.

Belongs to the neurotoxin 10 (Hwtx-1) family. 15 (Hntx-3) subfamily. In terms of assembly, monomer. Expressed by the venom gland.

The protein localises to the secreted. Lethal neurotoxin. Selectively blocks tetrodotoxin-sensitive voltage-gated sodium channels (Nav). Does not affect tetrodotoxin-resistant voltage-gated sodium channels or calcium channels. The sequence is that of Mu-theraphotoxin-Hhn2k from Cyriopagopus hainanus (Chinese bird spider).